A 225-amino-acid chain; its full sequence is Biosynthetic peptidoglycan transglycosylase (225 aa).

A helical membrane pass occupies residues 8–28; sequence VLLIFIGAILLIQLWIFSSLV.

Belongs to the glycosyltransferase 51 family.

The protein resides in the cell inner membrane. It carries out the reaction [GlcNAc-(1-&gt;4)-Mur2Ac(oyl-L-Ala-gamma-D-Glu-L-Lys-D-Ala-D-Ala)](n)-di-trans,octa-cis-undecaprenyl diphosphate + beta-D-GlcNAc-(1-&gt;4)-Mur2Ac(oyl-L-Ala-gamma-D-Glu-L-Lys-D-Ala-D-Ala)-di-trans,octa-cis-undecaprenyl diphosphate = [GlcNAc-(1-&gt;4)-Mur2Ac(oyl-L-Ala-gamma-D-Glu-L-Lys-D-Ala-D-Ala)](n+1)-di-trans,octa-cis-undecaprenyl diphosphate + di-trans,octa-cis-undecaprenyl diphosphate + H(+). It functions in the pathway cell wall biogenesis; peptidoglycan biosynthesis. In terms of biological role, peptidoglycan polymerase that catalyzes glycan chain elongation from lipid-linked precursors. The sequence is that of Biosynthetic peptidoglycan transglycosylase from Acinetobacter baumannii (strain AB307-0294).